Here is a 197-residue protein sequence, read N- to C-terminus: C-type lectin domain family 3 member A (197 aa).

Positions methionine 1–alanine 24 are cleaved as a signal peptide. 3 cysteine pairs are disulfide-bonded: cysteine 68–cysteine 78, cysteine 95–cysteine 191, and cysteine 167–cysteine 183. Positions phenylalanine 74–glutamate 192 constitute a C-type lectin domain.

The protein resides in the secreted. Its function is as follows. Promotes cell adhesion to laminin and fibronectin. The polypeptide is C-type lectin domain family 3 member A (CLEC3A) (Bos taurus (Bovine)).